The sequence spans 141 residues: Lutropin subunit beta (141 aa).

Residues 1–20 (MEMFQGLLLWLLLGVAGVWA) form the signal peptide. Intrachain disulfides connect Cys29–Cys77, Cys43–Cys92, Cys46–Cys130, Cys54–Cys108, Cys58–Cys110, and Cys113–Cys120. N-linked (GlcNAc...) asparagine glycosylation is present at Asn33.

This sequence belongs to the glycoprotein hormones subunit beta family. Heterodimer of a common alpha chain and a unique beta chain which confers biological specificity to thyrotropin, lutropin, follitropin and gonadotropin.

Its subcellular location is the secreted. Promotes spermatogenesis and ovulation by stimulating the testes and ovaries to synthesize steroids. In Bos taurus (Bovine), this protein is Lutropin subunit beta (LHB).